A 404-amino-acid chain; its full sequence is ATP phosphoribosyltransferase regulatory subunit (404 aa).

This sequence belongs to the class-II aminoacyl-tRNA synthetase family. HisZ subfamily. Heteromultimer composed of HisG and HisZ subunits.

It localises to the cytoplasm. Its pathway is amino-acid biosynthesis; L-histidine biosynthesis; L-histidine from 5-phospho-alpha-D-ribose 1-diphosphate: step 1/9. Required for the first step of histidine biosynthesis. May allow the feedback regulation of ATP phosphoribosyltransferase activity by histidine. In Picosynechococcus sp. (strain ATCC 27264 / PCC 7002 / PR-6) (Agmenellum quadruplicatum), this protein is ATP phosphoribosyltransferase regulatory subunit.